Here is a 325-residue protein sequence, read N- to C-terminus: CRISPR-associated endonuclease Cas1 2 (325 aa).

Residues E145, H212, and D225 each coordinate Mn(2+). Residues E283–G325 form a disordered region. The segment covering D315–G325 has biased composition (acidic residues).

Belongs to the CRISPR-associated endonuclease Cas1 family. In terms of assembly, homodimer, forms a heterotetramer with a Cas2 homodimer. The cofactor is Mg(2+). Requires Mn(2+) as cofactor.

CRISPR (clustered regularly interspaced short palindromic repeat), is an adaptive immune system that provides protection against mobile genetic elements (viruses, transposable elements and conjugative plasmids). CRISPR clusters contain spacers, sequences complementary to antecedent mobile elements, and target invading nucleic acids. CRISPR clusters are transcribed and processed into CRISPR RNA (crRNA). Acts as a dsDNA endonuclease. Involved in the integration of spacer DNA into the CRISPR cassette. The chain is CRISPR-associated endonuclease Cas1 2 from Thermus thermophilus (strain ATCC 27634 / DSM 579 / HB8).